Consider the following 834-residue polypeptide: Dual specificity calcium/calmodulin-dependent 3',5'-cyclic nucleotide phosphodiesterase 1 (834 aa).

Residues 152 to 338 (HSHGRDDQQQ…DELSEVQPDA (187 aa)) form a disordered region. The span at 207–222 (THSGPTGPPSNTSSET) shows a compositional bias: low complexity. Basic and acidic residues predominate over residues 236–252 (TVRESVMEESPSKDPGD). Residues 260–301 (STSTLTSQTTTSSSATAEPSAKAAESQAGSAGSSGSCSNPAA) show a composition bias toward low complexity. Residues 313 to 322 (WARSMSTNKT) show a composition bias toward polar residues. A calmodulin-binding region spans residues 364-387 (EKPKFRSVAHAIRAGIFVDRMYRR). One can recognise a PDEase domain in the interval 392–786 (ALTAFPPDVV…RIWKEQAVKD (395 aa)). Histidine 469 acts as the Proton donor in catalysis. Zn(2+)-binding residues include histidine 473, histidine 509, aspartate 510, and aspartate 617. Residue aspartate 510 coordinates Mg(2+). 2 disordered regions span residues 720–744 (IVIPNSGITPSMDKPRDHRTEAKTT) and 797–834 (EEAAAAAAAEAEESKPETETADGEQSEPAAEPADGAAA). Residues 732 to 741 (DKPRDHRTEA) show a composition bias toward basic and acidic residues. Residues 823-834 (EPAAEPADGAAA) show a composition bias toward low complexity.

This sequence belongs to the cyclic nucleotide phosphodiesterase family. PDE1 subfamily. Zn(2+) is required as a cofactor. Requires Mg(2+) as cofactor. In terms of tissue distribution, expressed in the head (at protein level). Expressed in Malpighian tubules. Expressed in neurons in the brain and ventral ganglia with male flies having higher levels of expression in the abdominal ganglia compared to female flies.

It catalyses the reaction a nucleoside 3',5'-cyclic phosphate + H2O = a nucleoside 5'-phosphate + H(+). The catalysed reaction is 3',5'-cyclic GMP + H2O = GMP + H(+). It carries out the reaction 3',5'-cyclic AMP + H2O = AMP + H(+). Its activity is regulated as follows. Type I PDE are activated by the binding of calmodulin in the presence of Ca(2+). Inhibited by zaprinast and sildenafil. Functionally, cyclic nucleotide phosphodiesterase with a dual specificity for the second messengers cAMP and cGMP, which are key regulators of many important physiological processes. Required for male fertility and male mating behavior. This is Dual specificity calcium/calmodulin-dependent 3',5'-cyclic nucleotide phosphodiesterase 1 from Drosophila melanogaster (Fruit fly).